The chain runs to 397 residues: Acetate kinase (397 aa).

N8 provides a ligand contact to Mg(2+). Position 15 (K15) interacts with ATP. R90 contacts substrate. D147 functions as the Proton donor/acceptor in the catalytic mechanism. 207–211 serves as a coordination point for ATP; the sequence is HLGAG. Residue E382 participates in Mg(2+) binding.

Belongs to the acetokinase family. In terms of assembly, homodimer. The cofactor is Mg(2+). Mn(2+) serves as cofactor.

The protein localises to the cytoplasm. The enzyme catalyses acetate + ATP = acetyl phosphate + ADP. It functions in the pathway metabolic intermediate biosynthesis; acetyl-CoA biosynthesis; acetyl-CoA from acetate: step 1/2. Its function is as follows. Catalyzes the formation of acetyl phosphate from acetate and ATP. Can also catalyze the reverse reaction. This chain is Acetate kinase, found in Lactiplantibacillus plantarum (strain ATCC BAA-793 / NCIMB 8826 / WCFS1) (Lactobacillus plantarum).